The primary structure comprises 303 residues: Coenzyme PQQ synthesis protein B (303 aa).

The protein belongs to the PqqB family.

The protein operates within cofactor biosynthesis; pyrroloquinoline quinone biosynthesis. In terms of biological role, may be involved in the transport of PQQ or its precursor to the periplasm. This Acinetobacter baumannii (strain AYE) protein is Coenzyme PQQ synthesis protein B.